The sequence spans 158 residues: Glycine/sarcosine/betaine reductase complex component A1 (158 aa).

Residue selenocysteine 46 is part of the active site. Position 46 (selenocysteine 46) is a non-standard amino acid, selenocysteine.

Belongs to the GrdA family. In terms of assembly, monomer. Component of the glycine, sarcosine and betaine reductase complexes, together with components B and C.

The catalysed reaction is acetyl phosphate + [thioredoxin]-disulfide + NH4(+) + H2O = [thioredoxin]-dithiol + glycine + phosphate + H(+). The enzyme catalyses acetyl phosphate + methylamine + [thioredoxin]-disulfide + H2O = sarcosine + [thioredoxin]-dithiol + phosphate + H(+). It catalyses the reaction acetyl phosphate + trimethylamine + [thioredoxin]-disulfide + H2O = glycine betaine + [thioredoxin]-dithiol + phosphate + H(+). Functionally, in the first step of glycine, betaine and sarcosine reductases, the substrate is bound to component PB via a Schiff base intermediate. Then the PB-activated substrate is nucleophilically attacked by the selenol anion of component PA to transform it to a carboxymethylated selenoether and the respective amine. By action of component PC, acetyl phosphate is formed, leaving component PA in its oxidized state. Finally component PA becomes reduced by the thioredoxin system to start a new catalytic cycle of reductive deamination. This Photobacterium profundum (strain SS9) protein is Glycine/sarcosine/betaine reductase complex component A1 (grdA1).